A 259-amino-acid chain; its full sequence is Deoxyribose-phosphate aldolase (259 aa).

The active-site Proton donor/acceptor is the Asp102. Lys167 (schiff-base intermediate with acetaldehyde) is an active-site residue. Catalysis depends on Lys201, which acts as the Proton donor/acceptor.

This sequence belongs to the DeoC/FbaB aldolase family. DeoC type 2 subfamily.

It localises to the cytoplasm. It catalyses the reaction 2-deoxy-D-ribose 5-phosphate = D-glyceraldehyde 3-phosphate + acetaldehyde. The protein operates within carbohydrate degradation; 2-deoxy-D-ribose 1-phosphate degradation; D-glyceraldehyde 3-phosphate and acetaldehyde from 2-deoxy-alpha-D-ribose 1-phosphate: step 2/2. In terms of biological role, catalyzes a reversible aldol reaction between acetaldehyde and D-glyceraldehyde 3-phosphate to generate 2-deoxy-D-ribose 5-phosphate. The sequence is that of Deoxyribose-phosphate aldolase from Escherichia coli O1:K1 / APEC.